The sequence spans 253 residues: uncharacterized protein (253 aa).

8 residues coordinate NADP(+): Ile17, Ser36, Asp62, Asn89, Tyr158, Lys162, Val191, and Thr193. The Proton donor role is filled by Tyr158. Lys162 (lowers pKa of active site Tyr) is an active-site residue.

Belongs to the short-chain dehydrogenases/reductases (SDR) family.

Its subcellular location is the cytoplasm. It localises to the nucleus. This is an uncharacterized protein from Schizosaccharomyces pombe (strain 972 / ATCC 24843) (Fission yeast).